The chain runs to 98 residues: Integration host factor subunit alpha (98 aa).

A disordered region spans residues 52–73; that stretch reads FDLREKNQRPGRNPKTGEDIPI.

The protein belongs to the bacterial histone-like protein family. Heterodimer of an alpha and a beta chain.

In terms of biological role, this protein is one of the two subunits of integration host factor, a specific DNA-binding protein that functions in genetic recombination as well as in transcriptional and translational control. The sequence is that of Integration host factor subunit alpha from Aeromonas hydrophila subsp. hydrophila (strain ATCC 7966 / DSM 30187 / BCRC 13018 / CCUG 14551 / JCM 1027 / KCTC 2358 / NCIMB 9240 / NCTC 8049).